The chain runs to 910 residues: Lysine-specific demethylase 7 homolog (910 aa).

The span at 1–11 (MDGNDINIQKN) shows a compositional bias: polar residues. Disordered regions lie at residues 1–58 (MDGN…HQTP), 103–162 (NKMG…GSEP), and 183–212 (QEEL…DRCG). Residues 25-35 (QHSDHKNHESA) are compositionally biased toward basic and acidic residues. Residues 43–58 (YTASQPALSSTEHQTP) show a composition bias toward polar residues. Residues 118–130 (PKSEPKIEPHVTD) are compositionally biased toward basic and acidic residues. Residues 150-160 (ESNQNYVSNGS) are compositionally biased toward polar residues. Residues 200 to 210 (PEQKTPKESDR) are compositionally biased toward basic and acidic residues. Residues 208 to 290 (SDRCGGCGKF…KFFCPKCVPH (83 aa)) form a PHD-type zinc finger. The region spanning 441–612 (SDNNEMKEIA…MQMRVYHLEN (172 aa)) is the JmjC domain. Substrate-binding positions include 505-510 (TDFHVD), Y518, K525, and H580. The Fe cation site is built by H508 and D510. Residue H580 coordinates Fe cation. 2 disordered regions span residues 712-790 (KIQN…PSEV) and 864-910 (EAVH…KLKM). Residues 748 to 757 (YKKKYTKKAK) show a composition bias toward basic residues. A compositionally biased stretch (basic and acidic residues) spans 758–780 (KDNDDAPKVKKAKKEEVPEEKVP).

The protein belongs to the JHDM1 histone demethylase family. JHDM1D subfamily. Fe(2+) is required as a cofactor. Mainly expressed in neurons. Also weakly expressed in some muscle, intestinal and hypodermal cells.

Its subcellular location is the nucleus. Its activity is regulated as follows. Competitively inhibited by 2-hydroxyglutarate. In terms of biological role, histone demethylase required for nervous system development. Specifically demethylates dimethylated 'Lys-9', 'Lys-23' and 'Lys-27' (H3K9me2, H3K23me2 and H3K27me2, respectively) of histone H3, thereby playing a central role in histone code. Promotes mitochondrial stress-induced longevity. This chain is Lysine-specific demethylase 7 homolog (jmjd-1.2), found in Caenorhabditis elegans.